The chain runs to 153 residues: Ubiquitin-conjugating enzyme E2 36 (153 aa).

The UBC core domain occupies 5–151 (NLPRRIIKET…AKEWTRLYAS (147 aa)). Catalysis depends on cysteine 89, which acts as the Glycyl thioester intermediate.

This sequence belongs to the ubiquitin-conjugating enzyme family. Interacts with yeast and human Mms2, with the RING domain of RGLG2 and with UEV1A, UEV1B, UEV1C and UEV1D. As to expression, ubiquitously expressed at low level.

It carries out the reaction S-ubiquitinyl-[E1 ubiquitin-activating enzyme]-L-cysteine + [E2 ubiquitin-conjugating enzyme]-L-cysteine = [E1 ubiquitin-activating enzyme]-L-cysteine + S-ubiquitinyl-[E2 ubiquitin-conjugating enzyme]-L-cysteine.. Its pathway is protein modification; protein ubiquitination. In terms of biological role, catalyzes the synthesis of non-canonical poly-ubiquitin chains that are linked through 'Lys-63'. This type of poly-ubiquitination does not lead to protein degradation by the proteasome. Mediates transcriptional activation of target genes. Required for postreplication repair of UV-damaged DNA and for adapting root developmental programs to suboptimal availability of iron. The sequence is that of Ubiquitin-conjugating enzyme E2 36 (UBC36) from Arabidopsis thaliana (Mouse-ear cress).